The sequence spans 104 residues: L-rhamnose mutarotase (104 aa).

Y18 contacts substrate. H22 (proton donor) is an active-site residue. Residues Y41 and 76–77 contribute to the substrate site; that span reads WW.

Belongs to the rhamnose mutarotase family. Homodimer.

Its subcellular location is the cytoplasm. It carries out the reaction alpha-L-rhamnose = beta-L-rhamnose. The protein operates within carbohydrate metabolism; L-rhamnose metabolism. Its function is as follows. Involved in the anomeric conversion of L-rhamnose. This is L-rhamnose mutarotase from Salmonella heidelberg (strain SL476).